Here is a 312-residue protein sequence, read N- to C-terminus: Ribosomal protein L11 methyltransferase (312 aa).

S-adenosyl-L-methionine is bound by residues threonine 163, glycine 184, aspartate 206, and asparagine 248.

Belongs to the methyltransferase superfamily. PrmA family.

It is found in the cytoplasm. The catalysed reaction is L-lysyl-[protein] + 3 S-adenosyl-L-methionine = N(6),N(6),N(6)-trimethyl-L-lysyl-[protein] + 3 S-adenosyl-L-homocysteine + 3 H(+). Its function is as follows. Methylates ribosomal protein L11. The polypeptide is Ribosomal protein L11 methyltransferase (Clostridium botulinum (strain Hall / ATCC 3502 / NCTC 13319 / Type A)).